Consider the following 206-residue polypeptide: Uridine kinase (206 aa).

9–16 (GGSGSGKT) is an ATP binding site.

This sequence belongs to the uridine kinase family.

It is found in the cytoplasm. The enzyme catalyses uridine + ATP = UMP + ADP + H(+). The catalysed reaction is cytidine + ATP = CMP + ADP + H(+). It functions in the pathway pyrimidine metabolism; CTP biosynthesis via salvage pathway; CTP from cytidine: step 1/3. Its pathway is pyrimidine metabolism; UMP biosynthesis via salvage pathway; UMP from uridine: step 1/1. In Borrelia garinii subsp. bavariensis (strain ATCC BAA-2496 / DSM 23469 / PBi) (Borreliella bavariensis), this protein is Uridine kinase.